The chain runs to 584 residues: AP-1-like transcription factor yap1 (584 aa).

The interval 23–179 is disordered; sequence LAALSSNQPP…AFRERKEKHL (157 aa). The Bipartite nuclear localization signal motif lies at 35-42; that stretch reads QQNDKQRS. Positions 36–48 are enriched in basic and acidic residues; it reads QNDKQRSQAKTDP. Positions 52–67 are enriched in low complexity; it reads PGNMSSGSFSMSPGFN. Residues 68 to 75 carry the Bipartite nuclear localization signal motif; sequence KTHPGSGG. The segment covering 79–94 has biased composition (acidic residues); sequence GDDESPFLDFNPELDF. 2 stretches are compositionally biased toward basic and acidic residues: residues 112-144 and 170-179; these read SEEHEVGEKRKDMSDNENEESGKKRRESDDKAA and AFRERKEKHL. One can recognise a bZIP domain in the interval 154 to 217; it reads SEPTSKRKAQ…ERLQVELREY (64 aa). The basic motif stretch occupies residues 159–180; the sequence is KRKAQNRAAQRAFRERKEKHLK. The interval 182-189 is leucine-zipper; it reads LETKVDEL. The transcription activation 1 stretch occupies residues 211-332; that stretch reads QVELREYRKR…PSPKVPSVYN (122 aa). 2 disordered regions span residues 267–379 and 418–441; these read IFNG…TKLN and RGKSESVSNTPSQPNNNYEQTPGP. A n-CRD region spans residues 284 to 296; the sequence is SSPATSDSQVPGV. Residues 300–309 show a composition bias toward polar residues; it reads ETLNGSNNRG. Over residues 336-362 the composition is skewed to low complexity; that stretch reads SASSHDSSNSCSPSSSSDSHQSQMLSS. Composition is skewed to polar residues over residues 363–379 and 422–437; these read NGTSPEPSSNSPATKLN and ESVSNTPSQPNNNYEQ. A transcription activation 2 region spans residues 377–480; sequence KLNDSVQNHH…SQDFGTFFDD (104 aa). Disulfide bonds link C531–C555, C531–C564, and C555–C564. The segment at 531-564 is c-CRD; the sequence is CTKIWDRLQSMEKFRNGEIDVDNLCSELRTKARC. The Nuclear export signal signature appears at 549–556; the sequence is IDVDNLCS.

It belongs to the bZIP family. YAP subfamily. Depending on the oxidative stress inducing agent, yap1 can undergo two distinct conformational changes, both involving disulfide bond formation, and both masking the nuclear export signal, thus abolishing nuclear export.

It is found in the nucleus. It localises to the cytoplasm. Transcription activator involved in oxidative stress response and redox homeostasis. Regulates the transcription of genes encoding antioxidant enzymes and components of the cellular thiol-reducing pathways. May be involved in antifungal resistance to voriconazole. This is AP-1-like transcription factor yap1 from Aspergillus flavus (strain ATCC 200026 / FGSC A1120 / IAM 13836 / NRRL 3357 / JCM 12722 / SRRC 167).